The primary structure comprises 189 residues: GTPase NRas (189 aa).

Residues 10 to 18 and 29 to 30 each bind GTP; these read GAGGVGKSA and VD. The Effector region motif lies at 32–40; it reads YDPTIEDSY. 57–61 contacts GTP; it reads DTAGQ. Ser-89 carries the post-translational modification Phosphoserine. Residue 116-119 participates in GTP binding; it reads NKCD. The tract at residues 166–185 is hypervariable region; the sequence is YRMKKLNSSDDGTQGCLGLS. Lys-170 participates in a covalent cross-link: Glycyl lysine isopeptide (Lys-Gly) (interchain with G-Cter in ubiquitin). Cys-181 carries the S-palmitoyl cysteine lipid modification. Cys-186 carries the S-farnesyl cysteine lipid modification. Residues 187–189 constitute a propeptide, removed in mature form; that stretch reads AVM.

Belongs to the small GTPase superfamily. Ras family. Interacts (active GTP-bound form preferentially) with RGS14. Interacts (active GTP-bound form) with RASSF7. Interacts (active GTP-bound form) with both SHOC2 and PP1c (all isoforms) to form a tertiary complex; SHOC2 and PP1c preferably bind M-Ras/MRAS, but they also bind K-Ras/KRAS, N-Ras/NRAS and H-Ras/HRAS. Post-translationally, palmitoylated by the ZDHHC9-GOLGA7 complex. Depalmitoylated by ABHD17A, ABHD17B and ABHD17C. A continuous cycle of de- and re-palmitoylation regulates rapid exchange between plasma membrane and Golgi. In terms of processing, acetylation at Lys-104 prevents interaction with guanine nucleotide exchange factors (GEFs). Ubiquitinated by the BCR(LZTR1) E3 ubiquitin ligase complex at Lys-170 in a non-degradative manner, leading to inhibit Ras signaling by decreasing Ras association with membranes. Post-translationally, phosphorylation at Ser-89 enhances NRAS association with its downstream effectors.

The protein localises to the cell membrane. Its subcellular location is the golgi apparatus membrane. It carries out the reaction GTP + H2O = GDP + phosphate + H(+). Its activity is regulated as follows. Alternates between an inactive form bound to GDP and an active form bound to GTP. Activated by a guanine nucleotide-exchange factor (GEF) and inactivated by a GTPase-activating protein (GAP). Functionally, ras proteins bind GDP/GTP and possess intrinsic GTPase activity. In Monodelphis domestica (Gray short-tailed opossum), this protein is GTPase NRas (NRAS).